The chain runs to 102 residues: MVDFAFELRKVQDTGKIVMGAKKSIHLAKVGGAKLIIVARNARPDIKEDIYYYAKLSGIPVYEFEGTSVELGTLLGRPHTVSALAVIDPGESKILALAGGKE.

Belongs to the eukaryotic ribosomal protein eL30 family. As to quaternary structure, part of the 50S ribosomal subunit.

The polypeptide is Large ribosomal subunit protein eL30 (Thermococcus kodakarensis (strain ATCC BAA-918 / JCM 12380 / KOD1) (Pyrococcus kodakaraensis (strain KOD1))).